Here is a 285-residue protein sequence, read N- to C-terminus: HTH-type transcriptional regulator MurR (285 aa).

The HTH rpiR-type domain maps to 1–77 (MLYLTKIRNA…MALIGEYSAS (77 aa)). The H-T-H motif DNA-binding region spans 37–56 (SRKMAKQLGISQSSIVKFAQ). An SIS domain is found at 128–268 (IIEVISKAPF…FVGLVQLNDV (141 aa)).

As to quaternary structure, homotetramer.

The protein operates within amino-sugar metabolism; N-acetylmuramate degradation [regulation]. In terms of biological role, represses the expression of the murPQ operon involved in the uptake and degradation of N-acetylmuramic acid (MurNAc). Binds to two adjacent inverted repeats within the operator region. MurNAc 6-phosphate, the substrate of MurQ, is the specific inducer that weakens binding of MurR to the operator. The polypeptide is HTH-type transcriptional regulator MurR (Shigella sonnei (strain Ss046)).